A 276-amino-acid chain; its full sequence is Large ribosomal subunit protein uL2 (276 aa).

Residues 223–276 (AVMNPVDHPHGGGEGKNSVGRKSPLTPWGKPALGIKTRGRKTSDKFIVRRRNEK) are disordered. A compositionally biased stretch (basic and acidic residues) spans 263-276 (KTSDKFIVRRRNEK).

It belongs to the universal ribosomal protein uL2 family. In terms of assembly, part of the 50S ribosomal subunit. Forms a bridge to the 30S subunit in the 70S ribosome.

Functionally, one of the primary rRNA binding proteins. Required for association of the 30S and 50S subunits to form the 70S ribosome, for tRNA binding and peptide bond formation. It has been suggested to have peptidyltransferase activity; this is somewhat controversial. Makes several contacts with the 16S rRNA in the 70S ribosome. The polypeptide is Large ribosomal subunit protein uL2 (Fusobacterium nucleatum subsp. nucleatum (strain ATCC 25586 / DSM 15643 / BCRC 10681 / CIP 101130 / JCM 8532 / KCTC 2640 / LMG 13131 / VPI 4355)).